We begin with the raw amino-acid sequence, 293 residues long: Elongation factor Ts (293 aa).

Positions 79–82 are involved in Mg(2+) ion dislocation from EF-Tu; sequence TDFV.

Belongs to the EF-Ts family.

It localises to the cytoplasm. Associates with the EF-Tu.GDP complex and induces the exchange of GDP to GTP. It remains bound to the aminoacyl-tRNA.EF-Tu.GTP complex up to the GTP hydrolysis stage on the ribosome. The chain is Elongation factor Ts from Bacillus velezensis (strain DSM 23117 / BGSC 10A6 / LMG 26770 / FZB42) (Bacillus amyloliquefaciens subsp. plantarum).